The sequence spans 166 residues: MQKVTFKEETYQLEGKALKVGDKAPDVKLVNGDLQEVNLLKQGVRFQVVSALPSLTGSVCLLQAKHFNEQTGKLPSVSFSVISMDLPFSQGQICGAEGIKDLRILSDFRYKAFGENYGVLLGKGSLQGLLARSVFVLDDKGVVIYKEIVQNILEEPNYEALLKVLK.

Residues 18–166 enclose the Thioredoxin domain; sequence LKVGDKAPDV…NYEALLKVLK (149 aa). The active-site Cysteine sulfenic acid (-SOH) intermediate is the cysteine 60. The cysteines at positions 60 and 94 are disulfide-linked.

Belongs to the peroxiredoxin family. Tpx subfamily. As to quaternary structure, homodimer.

It carries out the reaction a hydroperoxide + [thioredoxin]-dithiol = an alcohol + [thioredoxin]-disulfide + H2O. Functionally, thiol-specific peroxidase that catalyzes the reduction of hydrogen peroxide and organic hydroperoxides to water and alcohols, respectively. Plays a role in cell protection against oxidative stress by detoxifying peroxides. This Helicobacter pylori (strain ATCC 700392 / 26695) (Campylobacter pylori) protein is Thiol peroxidase.